The sequence spans 624 residues: Prickle planar cell polarity protein 3 (624 aa).

The span at 1–12 shows a compositional bias: basic residues; the sequence is MFARGSRRRRSG. Residues 1-26 are disordered; sequence MFARGSRRRRSGRAPPEAEDPARGQP. The PET domain occupies 74 to 182; that stretch reads SDFQRHSISD…TVRIFPVTIT (109 aa). LIM zinc-binding domains follow at residues 184-249, 250-309, and 310-373; these read AICE…CLRP, RCQA…RHAE, and YCDG…SETT. The interval 371–617 is disordered; it reads ETTAPGPGRR…SHPVMPRQTR (247 aa). The segment covering 383–409 has biased composition (low complexity); it reads SAGTVTTPLTTSTASFSATEGTSETAS. A compositionally biased stretch (pro residues) spans 447–458; that stretch reads PEPPTESPGHPA. Ser-475 and Ser-491 each carry phosphoserine. The span at 509–541 shows a compositional bias: basic residues; that stretch reads SCHHHHHHRRRRQRHRRRGSHHHHHHPGRHGHH. A compositionally biased stretch (low complexity) spans 545–564; the sequence is LGSGSDSGSCSSSPSSPSSE. Positions 587 to 601 are enriched in polar residues; sequence RTTQDTSTETFNSPA.

This sequence belongs to the prickle / espinas / testin family. Interacts with VANGL2 via its C-terminus. The VANGL2-dependent membrane recruitment of PRICKLE3 is a prerequisite for its polarization. Interacts with WTIP. WTIP is involved in the recruitment of PRICKLE3 to the basal body. Interacts with MT-ATP8, a component of the mitochondrial complex V. In terms of tissue distribution, widely expressed.

The protein localises to the cytoplasm. Its subcellular location is the cell membrane. It is found in the mitochondrion. In terms of biological role, involved in the planar cell polarity (PCP) pathway that is essential for the polarization of epithelial cells during morphogenetic processes, including gastrulation and neurulation. PCP is maintained by two molecular modules, the global and the core modules, PRICKLE3 being part of the core module. Distinct complexes of the core module segregate to opposite sides of the cell, where they interact with the opposite complex in the neighboring cell at or near the adherents junctions. Involved in the organization of the basal body. Involved in cilia growth and positioning. Required for proper assembly, stability, and function of mitochondrial membrane ATP synthase (mitochondrial complex V). This Mus musculus (Mouse) protein is Prickle planar cell polarity protein 3.